The chain runs to 172 residues: Interferon tau-3 (172 aa).

2 disulfide bridges follow: Cys1-Cys99 and Cys29-Cys139. Asn78 is a glycosylation site (N-linked (GlcNAc...) asparagine).

It belongs to the alpha/beta interferon family. IFN-alphaII subfamily. As to expression, constitutively and exclusively expressed in the mononuclear cells of the extraembryonic trophectoderm.

It localises to the secreted. In terms of biological role, paracrine hormone primarily responsible for maternal recognition of pregnancy. Interacts with endometrial receptors, probably type I interferon receptors, and blocks estrogen receptor expression, preventing the estrogen-induced increase in oxytocin receptor expression in the endometrium. This results in the suppression of the pulsatile endometrial release of the luteolytic hormone prostaglandin F2-alpha, hindering the regression of the corpus luteum (luteolysis) and therefore a return to ovarian cyclicity. This, and a possible direct effect of IFN-tau on prostaglandin synthesis, leads in turn to continued ovarian progesterone secretion, which stimulates the secretion by the endometrium of the nutrients required for the growth of the conceptus. In summary, displays particularly high antiviral and antiproliferative potency concurrently with particular weak cytotoxicity, high antiluteolytic activity and immunomodulatory properties. In contrast with other IFNs, IFN-tau is not virally inducible. The chain is Interferon tau-3 (IFNT3) from Bos taurus (Bovine).